The following is a 402-amino-acid chain: Putative F-box protein At1g70970 (402 aa).

In terms of domain architecture, F-box spans 4 to 52; sequence SSSETLHVEDLQTEIMSWLPLKSLLRFVIVSKKWASIIRGEQFKALYLR.

The protein is Putative F-box protein At1g70970 of Arabidopsis thaliana (Mouse-ear cress).